Here is a 90-residue protein sequence, read N- to C-terminus: Probable Fe(2+)-trafficking protein (90 aa).

Belongs to the Fe(2+)-trafficking protein family.

In terms of biological role, could be a mediator in iron transactions between iron acquisition and iron-requiring processes, such as synthesis and/or repair of Fe-S clusters in biosynthetic enzymes. This Albidiferax ferrireducens (strain ATCC BAA-621 / DSM 15236 / T118) (Rhodoferax ferrireducens) protein is Probable Fe(2+)-trafficking protein.